Here is a 339-residue protein sequence, read N- to C-terminus: Transcription factor IIIA (339 aa).

9 consecutive C2H2-type zinc fingers follow at residues 13-37 (YICSFADCGASYNKNWKLRAHLCKH), 43-67 (FPCKEEGCDKGFTSLHHLTRHSITH), 73-98 (FKCDSDKCDLTFTTKANMKKHFNRFH), 105-129 (YVCHFEGCDKAFKKHNQLKVHQFTH), 135-159 (YKCPHEGCDKSFSVPSCLKRHEKVH), 162-188 (YPCKKDDSCLFVGKTWTLYLKHVKECH), 192-214 (VMCDECKRTFKHKDYLRNHKKTH), 221-246 (YCCPRDGCERSYTTEFNLQSHMQSFH), and 252-276 (FACEHAECGKSFAMKKSLERHSVVH). 2 stretches are compositionally biased toward basic and acidic residues: residues 275 to 288 (VHDPEKRKLKEKCP) and 305 to 316 (KSKEKSAAKATE). Residues 275 to 339 (VHDPEKRKLK…ETKGSLVIEK (65 aa)) are disordered.

Synthesized in oocytes and, in much lower levels, in somatic cells.

The protein resides in the nucleus. Its function is as follows. Involved in ribosomal large subunit biogenesis. Interacts with the internal control region (ICR) of approximately 50 bases within the 5S RNA genes, is required for correct transcription of these genes by RNA polymerase III. Also binds the transcribed 5S RNA's. This chain is Transcription factor IIIA (gtf3a), found in Xenopus borealis (Kenyan clawed frog).